Reading from the N-terminus, the 118-residue chain is Thioredoxin AMT13 (118 aa).

A Thioredoxin domain is found at 1–110 (MSDNKAIQTL…LEDAIRANLG (110 aa)). Cysteines 36 and 39 form a disulfide.

This sequence belongs to the thioredoxin family.

It participates in mycotoxin biosynthesis. In terms of biological role, thioredoxin; part of the gene clusters that mediate the biosynthesis of AM-toxins, host-selective toxins (HSTs) causing Alternaria blotch on apple, a worldwide distributed disease. AM-toxins are cyclic depsipeptides containing the 3 residues 2-hydroxy-isovaleric acid (2-HIV), dehydroalanine, L-alanine which are common for all 3 AM-toxins I to III. The fourth precursor is L-alpha-amino-methoxyphenyl-valeric acid (L-Amv) for AM-toxin I, L-alpha-amino-phenyl-valeric acid (L-Apv) for AM-toxin II, and L-alpha-amino-hydroxyphenyl-valeric acid (L-Ahv) for AM-toxin III. AM-toxins have two target sites for affecting susceptible apple cells; they cause invagination of the plasma membrane and electrolyte loss and chloroplast disorganization. The non-ribosomal peptide synthetase AMT1 contains 4 catalytic modules and is responsible for activation of each residue in AM-toxin. The aldo-keto reductase AMT2 catalyzes the conversion of 2-keto-isovaleric acid (2-KIV) to 2-hydroxy-isovaleric acid (2-HIV), one of the precursor residues incorporated by AMT1 during AM-toxin biosynthesis, by reduction of its ketone to an alcohol. The cytochrome P450 monooxygenase AMT3 and the thioesterase AMT4 are also important for AM-toxin production, but their exact function within the AM-toxin biosynthesis are not known yet. Up to 21 proteins (including AMT1 to AMT4) are predicted to be involved in AM-toxin biosynthesis since their expression ishighly up-regulated in AM-toxin-producing cultures. In Alternaria alternata (Alternaria rot fungus), this protein is Thioredoxin AMT13.